The primary structure comprises 344 residues: Glycerol-3-phosphate dehydrogenase [NAD(P)+] (344 aa).

NADPH is bound by residues Ser-18, Tyr-19, His-39, and Lys-113. Residues Lys-113, Gly-142, and Thr-144 each contribute to the sn-glycerol 3-phosphate site. Ala-146 lines the NADPH pocket. Positions 198, 251, 261, 262, and 263 each coordinate sn-glycerol 3-phosphate. Catalysis depends on Lys-198, which acts as the Proton acceptor. Arg-262 is an NADPH binding site. The NADPH site is built by Ile-286 and Glu-288.

The protein belongs to the NAD-dependent glycerol-3-phosphate dehydrogenase family.

It localises to the cytoplasm. The enzyme catalyses sn-glycerol 3-phosphate + NAD(+) = dihydroxyacetone phosphate + NADH + H(+). The catalysed reaction is sn-glycerol 3-phosphate + NADP(+) = dihydroxyacetone phosphate + NADPH + H(+). It participates in membrane lipid metabolism; glycerophospholipid metabolism. Functionally, catalyzes the reduction of the glycolytic intermediate dihydroxyacetone phosphate (DHAP) to sn-glycerol 3-phosphate (G3P), the key precursor for phospholipid synthesis. The sequence is that of Glycerol-3-phosphate dehydrogenase [NAD(P)+] from Blochmanniella pennsylvanica (strain BPEN).